The sequence spans 434 residues: Histidinol dehydrogenase (434 aa).

NAD(+) is bound by residues Tyr130, Gln188, and Asn211. Substrate is bound by residues Ser237, Gln259, and His262. The Zn(2+) site is built by Gln259 and His262. Active-site proton acceptor residues include Glu326 and His327. Substrate-binding residues include His327, Asp360, Glu414, and His419. Residue Asp360 coordinates Zn(2+). His419 is a binding site for Zn(2+).

It belongs to the histidinol dehydrogenase family. Homodimer. The cofactor is Zn(2+).

The enzyme catalyses L-histidinol + 2 NAD(+) + H2O = L-histidine + 2 NADH + 3 H(+). The protein operates within amino-acid biosynthesis; L-histidine biosynthesis; L-histidine from 5-phospho-alpha-D-ribose 1-diphosphate: step 9/9. Its function is as follows. Catalyzes the sequential NAD-dependent oxidations of L-histidinol to L-histidinaldehyde and then to L-histidine. This Escherichia coli O6:H1 (strain CFT073 / ATCC 700928 / UPEC) protein is Histidinol dehydrogenase.